The following is a 430-amino-acid chain: Enolase (430 aa).

Residue Q164 participates in (2R)-2-phosphoglycerate binding. E208 functions as the Proton donor in the catalytic mechanism. 3 residues coordinate Mg(2+): D245, E288, and D315. The (2R)-2-phosphoglycerate site is built by K340, R369, S370, and K391. Catalysis depends on K340, which acts as the Proton acceptor.

It belongs to the enolase family. Mg(2+) is required as a cofactor.

It is found in the cytoplasm. It localises to the secreted. The protein localises to the cell surface. It carries out the reaction (2R)-2-phosphoglycerate = phosphoenolpyruvate + H2O. It functions in the pathway carbohydrate degradation; glycolysis; pyruvate from D-glyceraldehyde 3-phosphate: step 4/5. In terms of biological role, catalyzes the reversible conversion of 2-phosphoglycerate (2-PG) into phosphoenolpyruvate (PEP). It is essential for the degradation of carbohydrates via glycolysis. This chain is Enolase, found in Thermococcus onnurineus (strain NA1).